A 333-amino-acid chain; its full sequence is Holliday junction branch migration complex subunit RuvB (333 aa).

Positions M1–Y182 are large ATPase domain (RuvB-L). ATP-binding positions include L21, R22, G63, K66, T67, T68, E129–F131, R172, Y182, and R219. T67 is a Mg(2+) binding site. Residues T183 to Q253 form a small ATPAse domain (RuvB-S) region. A head domain (RuvB-H) region spans residues K256–V333. DNA-binding residues include R311 and R316.

This sequence belongs to the RuvB family. Homohexamer. Forms an RuvA(8)-RuvB(12)-Holliday junction (HJ) complex. HJ DNA is sandwiched between 2 RuvA tetramers; dsDNA enters through RuvA and exits via RuvB. An RuvB hexamer assembles on each DNA strand where it exits the tetramer. Each RuvB hexamer is contacted by two RuvA subunits (via domain III) on 2 adjacent RuvB subunits; this complex drives branch migration. In the full resolvosome a probable DNA-RuvA(4)-RuvB(12)-RuvC(2) complex forms which resolves the HJ.

Its subcellular location is the cytoplasm. It catalyses the reaction ATP + H2O = ADP + phosphate + H(+). In terms of biological role, the RuvA-RuvB-RuvC complex processes Holliday junction (HJ) DNA during genetic recombination and DNA repair, while the RuvA-RuvB complex plays an important role in the rescue of blocked DNA replication forks via replication fork reversal (RFR). RuvA specifically binds to HJ cruciform DNA, conferring on it an open structure. The RuvB hexamer acts as an ATP-dependent pump, pulling dsDNA into and through the RuvAB complex. RuvB forms 2 homohexamers on either side of HJ DNA bound by 1 or 2 RuvA tetramers; 4 subunits per hexamer contact DNA at a time. Coordinated motions by a converter formed by DNA-disengaged RuvB subunits stimulates ATP hydrolysis and nucleotide exchange. Immobilization of the converter enables RuvB to convert the ATP-contained energy into a lever motion, pulling 2 nucleotides of DNA out of the RuvA tetramer per ATP hydrolyzed, thus driving DNA branch migration. The RuvB motors rotate together with the DNA substrate, which together with the progressing nucleotide cycle form the mechanistic basis for DNA recombination by continuous HJ branch migration. Branch migration allows RuvC to scan DNA until it finds its consensus sequence, where it cleaves and resolves cruciform DNA. The protein is Holliday junction branch migration complex subunit RuvB of Bacillus cereus (strain G9842).